Reading from the N-terminus, the 438-residue chain is Hydrogenobyrinate a,c-diamide synthase (438 aa).

A GATase cobBQ-type domain is found at 247–438 (RIALAEDAAF…TFFHAIAKGG (192 aa)). The active-site Nucleophile is C329.

This sequence belongs to the CobB/CbiA family. Mg(2+) serves as cofactor.

It carries out the reaction hydrogenobyrinate + 2 L-glutamine + 2 ATP + 2 H2O = hydrogenobyrinate a,c-diamide + 2 L-glutamate + 2 ADP + 2 phosphate + 2 H(+). It functions in the pathway cofactor biosynthesis; adenosylcobalamin biosynthesis; cob(II)yrinate a,c-diamide from precorrin-2 (aerobic route): step 9/10. Functionally, catalyzes the ATP-dependent amidation of the two carboxylate groups at positions a and c of hydrogenobyrinate, using either L-glutamine or ammonia as the nitrogen source. The chain is Hydrogenobyrinate a,c-diamide synthase from Agrobacterium fabrum (strain C58 / ATCC 33970) (Agrobacterium tumefaciens (strain C58)).